Reading from the N-terminus, the 149-residue chain is Arginine repressor (149 aa).

This sequence belongs to the ArgR family.

It is found in the cytoplasm. The protein operates within amino-acid biosynthesis; L-arginine biosynthesis [regulation]. Regulates arginine biosynthesis genes. The sequence is that of Arginine repressor from Exiguobacterium sibiricum (strain DSM 17290 / CCUG 55495 / CIP 109462 / JCM 13490 / 255-15).